Reading from the N-terminus, the 437-residue chain is MEVFEAIESGCVSDVIKALKGNDSDPNMVNEYGCSLLHCAVENGNTEIARILLLEGANPDLYTESTPTALHRAVILRHYDIVNLLMEFNVDPDNYENHESRTPLEYAVKLNDVKMTKTLLDYGADAEDIYRFNCPINDAAANGNLEICKLLIDAGARINSRSMGSVYTIHHAIRSGNYELVVELLSRGALPDVEDELSFSSLHHAVMEGSADMVLTLLEHGASVDVQDFCGRTPLFLAANASELDIVKVLLDFWADTSVSSGRNTPLSVCDLNSDTGIEIAKQIISTMVINTEYKYHKVINEEARRNDLEIIESNNEMKDWKDSCIEEVEKMRKTTLGSDRRSLLDLCLNCDDNAIAKCLNCISCEGFFIYRQLIEYTIERGLLRHESLDKALDVMEKAFEKNRNVKDNGLKDWSDLPLGIKYDILEKIDEEDLPYC.

ANK repeat units follow at residues 32-61 (YGCS…NPDL), 65-94 (STPT…DPDN), 99-128 (ESRT…DAED), 131-160 (RFNC…RINS), 164-195 (GSVY…DVED), 197-226 (LSFS…SVDV), and 230-259 (CGRT…DTSV).

The chain is Putative ankyrin repeat protein FPV014 from Fowlpox virus (strain NVSL) (FPV).